The sequence spans 365 residues: Cobalt-precorrin-5B C(1)-methyltransferase (365 aa).

Belongs to the CbiD family.

It catalyses the reaction Co-precorrin-5B + S-adenosyl-L-methionine = Co-precorrin-6A + S-adenosyl-L-homocysteine. The protein operates within cofactor biosynthesis; adenosylcobalamin biosynthesis; cob(II)yrinate a,c-diamide from sirohydrochlorin (anaerobic route): step 6/10. Functionally, catalyzes the methylation of C-1 in cobalt-precorrin-5B to form cobalt-precorrin-6A. The sequence is that of Cobalt-precorrin-5B C(1)-methyltransferase from Polaromonas naphthalenivorans (strain CJ2).